The primary structure comprises 183 residues: Probable chemoreceptor glutamine deamidase CheD (183 aa).

Belongs to the CheD family.

The catalysed reaction is L-glutaminyl-[protein] + H2O = L-glutamyl-[protein] + NH4(+). Functionally, probably deamidates glutamine residues to glutamate on methyl-accepting chemotaxis receptors (MCPs), playing an important role in chemotaxis. This chain is Probable chemoreceptor glutamine deamidase CheD, found in Sinorhizobium medicae (strain WSM419) (Ensifer medicae).